A 481-amino-acid chain; its full sequence is Aspartyl/glutamyl-tRNA(Asn/Gln) amidotransferase subunit B (481 aa).

The protein belongs to the GatB/GatE family. GatB subfamily. As to quaternary structure, heterotrimer of A, B and C subunits.

It catalyses the reaction L-glutamyl-tRNA(Gln) + L-glutamine + ATP + H2O = L-glutaminyl-tRNA(Gln) + L-glutamate + ADP + phosphate + H(+). It carries out the reaction L-aspartyl-tRNA(Asn) + L-glutamine + ATP + H2O = L-asparaginyl-tRNA(Asn) + L-glutamate + ADP + phosphate + 2 H(+). Allows the formation of correctly charged Asn-tRNA(Asn) or Gln-tRNA(Gln) through the transamidation of misacylated Asp-tRNA(Asn) or Glu-tRNA(Gln) in organisms which lack either or both of asparaginyl-tRNA or glutaminyl-tRNA synthetases. The reaction takes place in the presence of glutamine and ATP through an activated phospho-Asp-tRNA(Asn) or phospho-Glu-tRNA(Gln). The polypeptide is Aspartyl/glutamyl-tRNA(Asn/Gln) amidotransferase subunit B (Cellvibrio japonicus (strain Ueda107) (Pseudomonas fluorescens subsp. cellulosa)).